The sequence spans 372 residues: Putative RING-H2 finger protein ATL21A (372 aa).

A signal peptide spans 1-20; that stretch reads MTFSKQLFLYLFFLFPLLHA. The helical transmembrane segment at 242–262 threads the bilayer; it reads IILLSIIGPLTIFATCIAVGV. An RING-type; atypical zinc finger spans residues 320-362; it reads CPICLSEYASKETVRCIPECDHCFHSECIDVWLKIHGSCPLCR.

This sequence belongs to the RING-type zinc finger family. ATL subfamily.

It is found in the membrane. It catalyses the reaction S-ubiquitinyl-[E2 ubiquitin-conjugating enzyme]-L-cysteine + [acceptor protein]-L-lysine = [E2 ubiquitin-conjugating enzyme]-L-cysteine + N(6)-ubiquitinyl-[acceptor protein]-L-lysine.. It functions in the pathway protein modification; protein ubiquitination. This chain is Putative RING-H2 finger protein ATL21A (ATL21A), found in Arabidopsis thaliana (Mouse-ear cress).